A 188-amino-acid polypeptide reads, in one-letter code: dCTP deaminase (188 aa).

Residues 111-116, 135-137, glutamine 156, tyrosine 170, lysine 179, and glutamine 180 each bind dCTP; these read KSTYAR and TLE. The active-site Proton donor/acceptor is glutamate 137.

It belongs to the dCTP deaminase family. Homotrimer.

The catalysed reaction is dCTP + H2O + H(+) = dUTP + NH4(+). It participates in pyrimidine metabolism; dUMP biosynthesis; dUMP from dCTP (dUTP route): step 1/2. Catalyzes the deamination of dCTP to dUTP. The protein is dCTP deaminase of Rickettsia canadensis (strain McKiel).